Consider the following 563-residue polypeptide: MDYKNLVAERIKENTELEVDLIEKLIEIPPKKEMGDYAFPCFQLAKTFRKAPNLIAEELKEKINKEGFEKVVTVGPYLNFFVDKTILIKDVLEKVLSEKEKYGSSKVGEGKNVVVEYSSPNIAKPFHIGHLFTTAIGNALYKILSFEGYNCIGINHLGDWGTQFGKLISAYRRWVDEEALEKDAIGELLRIYVKFHEEAEKDPELEKEARLNFKRLEEGSEEETELWNRFKDLSLKEFNKVYDMLGIKFDSLAGESFYSDKMDAVVQEIDDKGLLVDSNGAKVVMLDEYNMPPCMIKKSDGATIYATRDLAAAIYRKKTYDFHKCIYVVGTPQALHFKQVFTTLKLMGHDWADDCKHVGFGLVKLANKKLSTRNGDVVFLEDLLNQSVEETLKIINEKNPNLKNKEDVAKKLGIGAVVFTYLKNNRERDIVFDWKEILSFDGETGPYVEYSYARGKSILRKAGELTGEADYSKLSSKEEFELAKLLGGFNDAIMNAIDKLEPAIVTRYVIEVAKAFNKFYNAHGILNAEDNDVKLARVKLVEATCQVIKNALNLLGIDVVEEM.

A 'HIGH' region motif is present at residues 120 to 130 (PNIAKPFHIGH).

This sequence belongs to the class-I aminoacyl-tRNA synthetase family. Monomer.

It localises to the cytoplasm. The catalysed reaction is tRNA(Arg) + L-arginine + ATP = L-arginyl-tRNA(Arg) + AMP + diphosphate. This is Arginine--tRNA ligase from Clostridium botulinum (strain 657 / Type Ba4).